We begin with the raw amino-acid sequence, 566 residues long: Peroxisomal targeting signal receptor (566 aa).

Cys5 participates in a covalent cross-link: Glycyl cysteine thioester (Cys-Gly) (interchain with G-Cter in ubiquitin). Positions 6 to 28 are amphipathic helix 1 (AH1); the sequence is SVGSNPLAQLNKHAQQNPALRQV. A Glycyl lysine isopeptide (Lys-Gly) (interchain with G-Cter in ubiquitin) cross-link involves residue Lys17. Positions 53-71 are amphipathic helix 2 (AH2); the sequence is RFQMDQFMNRSPGFSDGQL. A disordered region spans residues 88–159; sequence GLKKQDSGSS…IGRPMMHTGI (72 aa). Over residues 94–142 the composition is skewed to polar residues; that stretch reads SGSSNMSAGDTAQHSRSWGNEFNSRSPQQGLASRVNNVERISNTNSMSS. The WxxxF/Y motif 1 signature appears at 111–115; that stretch reads WGNEF. Residues 145-151 form an amphipathic helix 3 (AH3) region; that stretch reads PGMSRIG. Positions 187-191 match the WxxxF/Y motif 2 motif; it reads WNEQF. The tract at residues 225–241 is amphipathic helix 4 (AH4); sequence FQEVWDKLQAETADNNL. A WxxxF/Y motif 3 motif is present at residues 248-252; the sequence is WEKDY. 5 TPR repeats span residues 277 to 311, 312 to 345, 416 to 449, 451 to 483, and 485 to 517; these read NPNAYEIGCILMENGAKLSEAALAFEAAVQEDPAH, VDAWLKLGLVQTQNEKEMNGISALEQCLSLDPTN, PEVQLGLGTLFYANEEFGKTIDCFRTALEVNPND, LMWNRLGASLANSNRSEEAIQAYHKALALKPSF, and RARYNLAISSMNIGCYKEAAESLLSALSMHEVE.

It belongs to the peroxisomal targeting signal receptor family. In terms of assembly, interacts (via WxxxF/Y and LVxEF motifs) with PEX14; promoting translocation through the PEX13-PEX14 docking complex. In terms of processing, monoubiquitinated at Cys-5 by PEX2 during PEX5 passage through the retrotranslocation channel: monoubiquitination acts as a signal for PEX5 extraction and is required for proper export from peroxisomes and recycling. When PEX5 recycling is compromised, polyubiquitinated at Lys-17 by PEX10 during its passage through the retrotranslocation channel, leading to its degradation.

The protein localises to the cytoplasm. Its subcellular location is the cytosol. The protein resides in the peroxisome matrix. Receptor that mediates peroxisomal import of proteins containing a C-terminal PTS1-type tripeptide peroxisomal targeting signal (SKL-type). Binds to cargo proteins containing a PTS1 peroxisomal targeting signal in the cytosol, and translocates them into the peroxisome matrix by passing through the PEX13-PEX14 docking complex along with cargo proteins. PEX5 receptor is then retrotranslocated into the cytosol, leading to release of bound cargo in the peroxisome matrix, and reset for a subsequent peroxisome import cycle. This is Peroxisomal targeting signal receptor (PEX5) from Kluyveromyces lactis (strain ATCC 8585 / CBS 2359 / DSM 70799 / NBRC 1267 / NRRL Y-1140 / WM37) (Yeast).